The primary structure comprises 498 residues: Glycerol kinase 1 (498 aa).

T12 contacts ADP. ATP-binding residues include T12, T13, and S14. T12 is a binding site for sn-glycerol 3-phosphate. R16 contributes to the ADP binding site. Sn-glycerol 3-phosphate is bound by residues R82, E83, Y134, and D243. Positions 82, 83, 134, 243, and 244 each coordinate glycerol. T265 and G308 together coordinate ADP. ATP-binding residues include T265, G308, Q312, and G409. ADP-binding residues include G409 and N413.

It belongs to the FGGY kinase family. In terms of assembly, homotetramer and homodimer (in equilibrium).

The catalysed reaction is glycerol + ATP = sn-glycerol 3-phosphate + ADP + H(+). It participates in polyol metabolism; glycerol degradation via glycerol kinase pathway; sn-glycerol 3-phosphate from glycerol: step 1/1. Activated by phosphorylation and inhibited by fructose 1,6-bisphosphate (FBP). Its function is as follows. Key enzyme in the regulation of glycerol uptake and metabolism. Catalyzes the phosphorylation of glycerol to yield sn-glycerol 3-phosphate. The protein is Glycerol kinase 1 of Clostridium tetani (strain Massachusetts / E88).